A 152-amino-acid chain; its full sequence is Large ribosomal subunit protein bL9 (152 aa).

It belongs to the bacterial ribosomal protein bL9 family.

Functionally, binds to the 23S rRNA. The polypeptide is Large ribosomal subunit protein bL9 (Synechococcus sp. (strain RCC307)).